The chain runs to 258 residues: MTKTRTLVLIPARMAATRLPGKPLLDIGGLPMVVHVLRRAETAGIGRVAVATDTPEIAAAVTAHGGEAIMTRADHPSGSDRVFEALDRLDPDGRIETIINLQGDFPTIRPDIIRDVLKPLADPAVDIATLAAEIHSDEEATNPNVVKAVGSPVAPRRLRALYFTRATAPHGDGPRYHHIGLYAYRRKALQRFVELPPSPLERQERLEQLRALEGGMRIDIMIVDDVPRGVDTAADLETARRILASVPIPKLAYPRSNL.

The protein belongs to the KdsB family.

Its subcellular location is the cytoplasm. It carries out the reaction 3-deoxy-alpha-D-manno-oct-2-ulosonate + CTP = CMP-3-deoxy-beta-D-manno-octulosonate + diphosphate. The protein operates within nucleotide-sugar biosynthesis; CMP-3-deoxy-D-manno-octulosonate biosynthesis; CMP-3-deoxy-D-manno-octulosonate from 3-deoxy-D-manno-octulosonate and CTP: step 1/1. It functions in the pathway bacterial outer membrane biogenesis; lipopolysaccharide biosynthesis. Its function is as follows. Activates KDO (a required 8-carbon sugar) for incorporation into bacterial lipopolysaccharide in Gram-negative bacteria. The chain is 3-deoxy-manno-octulosonate cytidylyltransferase from Nitrobacter hamburgensis (strain DSM 10229 / NCIMB 13809 / X14).